Here is a 2596-residue protein sequence, read N- to C-terminus: Protein unc-79 homolog (2596 aa).

Phosphoserine is present on residues serine 754 and serine 758. Disordered stretches follow at residues 907–931 (GPEG…TVPS), 1539–1573 (SQRQ…GFQE), 1594–1632 (VDSP…DSDS), 1648–1679 (EEEE…SVLS), 1695–1832 (KDFS…FKIQ), and 1863–1909 (LGEQ…KQIQ). Basic and acidic residues predominate over residues 1594-1606 (VDSPGKPAPREDL). Residues 1662-1679 (GNNAASSPSIPSQPSVLS) show a composition bias toward low complexity. The segment covering 1704-1713 (NHQSASNEDS) has biased composition (polar residues). Basic and acidic residues predominate over residues 1726–1735 (ELSKSEELRE). Residues 1897 to 1908 (ETSSHSSISKQI) show a composition bias toward polar residues. Transmembrane regions (helical) follow at residues 2184–2204 (LLSF…ELCG) and 2426–2446 (CVLH…WTVY).

It belongs to the unc-79 family. In terms of assembly, NALCN complex consists of NALCN and auxiliary subunits, UNC79, UNC80 and NACL1. These auxiliary subunits are essential for the NALCN channel function. UNC80 bridges NALCN to UNC79. Interacts with NALCN. Interacts with UNC80.

It is found in the cell membrane. Its function is as follows. Auxiliary subunit of the NALCN sodium channel complex. The NALCN sodium channel complex is a voltage-gated ion channel responsible for the resting Na(+) permeability that controls neuronal excitability. Activated by neuropeptides substance P, neurotensin, and extracellular calcium that regulates neuronal excitability by controlling the sizes of NALCN-dependent sodium-leak current. The protein is Protein unc-79 homolog (Unc79) of Mus musculus (Mouse).